The following is a 361-amino-acid chain: Outer membrane protein P2 (361 aa).

An N-terminal signal peptide occupies residues 1–20 (MKKTLAALIVGAFAASAANA).

The protein belongs to the Gram-negative porin family. In terms of assembly, homotrimer.

The protein resides in the cell outer membrane. In terms of biological role, forms pores that allow passive diffusion of small molecules across the outer membrane. This Haemophilus influenzae protein is Outer membrane protein P2 (ompP2).